The primary structure comprises 831 residues: DNA ligase (831 aa).

NAD(+) is bound by residues 34-38 (DADYD), 83-84 (SL), and Glu-114. Lys-116 serves as the catalytic N6-AMP-lysine intermediate. NAD(+) contacts are provided by Arg-137, Glu-174, Lys-291, and Lys-315. Zn(2+)-binding residues include Cys-409, Cys-412, Cys-427, and Cys-433. In terms of domain architecture, BRCT spans 749–831 (AHTAPLNGQS…LAFLGQYSAQ (83 aa)).

This sequence belongs to the NAD-dependent DNA ligase family. LigA subfamily. Requires Mg(2+) as cofactor. Mn(2+) serves as cofactor.

The catalysed reaction is NAD(+) + (deoxyribonucleotide)n-3'-hydroxyl + 5'-phospho-(deoxyribonucleotide)m = (deoxyribonucleotide)n+m + AMP + beta-nicotinamide D-nucleotide.. DNA ligase that catalyzes the formation of phosphodiester linkages between 5'-phosphoryl and 3'-hydroxyl groups in double-stranded DNA using NAD as a coenzyme and as the energy source for the reaction. It is essential for DNA replication and repair of damaged DNA. The protein is DNA ligase of Xylella fastidiosa (strain 9a5c).